The following is a 132-amino-acid chain: Small ribosomal subunit protein uS8 (132 aa).

This sequence belongs to the universal ribosomal protein uS8 family. As to quaternary structure, part of the 30S ribosomal subunit. Contacts proteins S5 and S12.

Its function is as follows. One of the primary rRNA binding proteins, it binds directly to 16S rRNA central domain where it helps coordinate assembly of the platform of the 30S subunit. This chain is Small ribosomal subunit protein uS8, found in Streptococcus pneumoniae serotype 19F (strain G54).